Reading from the N-terminus, the 360-residue chain is Ferredoxin--NADP reductase, leaf isozyme, chloroplastic (360 aa).

Residues 1 to 52 (MAAAVTAAVSLPYSNSTSLPIRTSIVAPERLVFKKVSLNNVSISGRVGTIRA) constitute a chloroplast transit peptide. Residues 81 to 203 (KEPYVGRCLL…TGPVGKEMLM (123 aa)) enclose the FAD-binding FR-type domain. FAD-binding positions include 139 to 142 (RLYS), 160 to 162 (CVK), Tyr-166, 177 to 179 (VCS), and Thr-218. NADP(+) is bound by residues Ser-142 and Lys-162. Residues Thr-218, 250–251 (VP), 280–281 (SR), Lys-290, 319–320 (GL), and Glu-358 each bind NADP(+).

It belongs to the ferredoxin--NADP reductase type 1 family. Monomer. Interacts with TIC62 (via C-terminus). Requires FAD as cofactor.

The protein localises to the plastid. The protein resides in the chloroplast stroma. It is found in the chloroplast thylakoid membrane. It carries out the reaction 2 reduced [2Fe-2S]-[ferredoxin] + NADP(+) + H(+) = 2 oxidized [2Fe-2S]-[ferredoxin] + NADPH. The protein operates within energy metabolism; photosynthesis. Functionally, may play a key role in regulating the relative amounts of cyclic and non-cyclic electron flow to meet the demands of the plant for ATP and reducing power. The sequence is that of Ferredoxin--NADP reductase, leaf isozyme, chloroplastic (PETH) from Pisum sativum (Garden pea).